Consider the following 422-residue polypeptide: Lipase member M (422 aa).

The N-terminal stretch at 1–33 is a signal peptide; sequence MSEILSRVWTVSHRVEIWLLILVAYLLQRNVNS. Residue Asn-48 is glycosylated (N-linked (GlcNAc...) asparagine). Positions 92-392 constitute an AB hydrolase-1 domain; it reads PVVLLQHGLL…EWAHVDFIWG (301 aa). Ser-186 serves as the catalytic Nucleophile. Cys-260 and Cys-269 are disulfide-bonded. Residues Asp-357 and His-386 each act as charge relay system in the active site.

Belongs to the AB hydrolase superfamily. Lipase family.

It is found in the secreted. Its function is as follows. Plays a highly specific role in the last step of keratinocyte differentiation. May have an essential function in lipid metabolism of the most differentiated epidermal layers. This Mus musculus (Mouse) protein is Lipase member M (Lipm).